The primary structure comprises 360 residues: SPRY domain-containing SOCS box protein 3 (360 aa).

The interval 20–55 (RDQDARSPTLPAEEEAWGYDSDGQHSNSDSDTDLLH) is disordered. The 190-residue stretch at 85–274 (LHTFHQIKSC…MKVIRSCCCR (190 aa)) folds into the B30.2/SPRY domain. Residues 264-315 (SMKVIRSCCCRTSLQYLCCARLRQLLPDSVDSLEVLPLPPGLKQVLGNKLGW) enclose the SOCS box domain. Positions 323-350 (RSNQHKGDTSATTSCGSDSDSSCTPGQD) are disordered. Residues 331-346 (TSATTSCGSDSDSSCT) show a composition bias toward low complexity.

Belongs to the SPSB family. In terms of assembly, substrate-recognition component of the ECS(SPSB3) complex, composed of spsb3, cul5, elob, elob and rnf7/rbx2.

The protein resides in the nucleus. It functions in the pathway protein modification; protein ubiquitination. In terms of biological role, substrate-recognition component of a cullin-5-RING E3 ubiquitin-protein ligase complex (ECS complex, also named CRL5 complex), which mediates the ubiquitination and subsequent proteasomal degradation of target proteins. The protein is SPRY domain-containing SOCS box protein 3 (spsb3) of Xenopus tropicalis (Western clawed frog).